The chain runs to 117 residues: Large ribosomal subunit protein uL22 (117 aa).

Belongs to the universal ribosomal protein uL22 family. As to quaternary structure, part of the 50S ribosomal subunit.

Its function is as follows. This protein binds specifically to 23S rRNA; its binding is stimulated by other ribosomal proteins, e.g. L4, L17, and L20. It is important during the early stages of 50S assembly. It makes multiple contacts with different domains of the 23S rRNA in the assembled 50S subunit and ribosome. The globular domain of the protein is located near the polypeptide exit tunnel on the outside of the subunit, while an extended beta-hairpin is found that lines the wall of the exit tunnel in the center of the 70S ribosome. The chain is Large ribosomal subunit protein uL22 from Staphylococcus epidermidis (strain ATCC 35984 / DSM 28319 / BCRC 17069 / CCUG 31568 / BM 3577 / RP62A).